Here is a 359-residue protein sequence, read N- to C-terminus: Large ribosomal subunit protein bL27m (359 aa).

Residues 1–24 constitute a mitochondrion transit peptide; it reads MSFWKVATLWQMPLRPSILVQVRT. The segment at 29-48 is disordered; the sequence is AAGSRTSMKDSAGRRLGPKK. Over residues 35 to 48 the composition is skewed to basic and acidic residues; that stretch reads SMKDSAGRRLGPKK.

It belongs to the bacterial ribosomal protein bL27 family.

The protein localises to the mitochondrion. Its function is as follows. Component of the large subunit of mitochondrial ribosome. This Eremothecium gossypii (strain ATCC 10895 / CBS 109.51 / FGSC 9923 / NRRL Y-1056) (Yeast) protein is Large ribosomal subunit protein bL27m (MRPL2).